The following is a 212-amino-acid chain: MRGLVRLGLTGGIGSGKSTVAGLLAELGAAVVDADAIARHLTAPNGPAIASIAATFGPDFITSTGAMDREKMRALAYADITARQRLEAIIHPLVRQETQRQTLLAANQGHPCIVFDVPLLVESTTWREKLDWVLVVDCTPATQISRVMARNALTRDEVEKIIASQASRRHRLNAADAVIFNDSLSLGALALEVDEVARHFGLSCQPLSPNQK.

The DPCK domain occupies 6 to 211; that stretch reads RLGLTGGIGS…LSCQPLSPNQ (206 aa). 14–19 lines the ATP pocket; that stretch reads GSGKST.

It belongs to the CoaE family.

The protein localises to the cytoplasm. It catalyses the reaction 3'-dephospho-CoA + ATP = ADP + CoA + H(+). It functions in the pathway cofactor biosynthesis; coenzyme A biosynthesis; CoA from (R)-pantothenate: step 5/5. In terms of biological role, catalyzes the phosphorylation of the 3'-hydroxyl group of dephosphocoenzyme A to form coenzyme A. This Albidiferax ferrireducens (strain ATCC BAA-621 / DSM 15236 / T118) (Rhodoferax ferrireducens) protein is Dephospho-CoA kinase.